A 355-amino-acid polypeptide reads, in one-letter code: Lipopolysaccharide heptosyltransferase 1 (355 aa).

Residues threonine 186, threonine 187, lysine 191, glutamate 221, aspartate 260, threonine 261, glycine 262, and histidine 265 each contribute to the ADP-L-glycero-beta-D-manno-heptose site.

The protein belongs to the glycosyltransferase 9 family.

Its subcellular location is the cell inner membrane. It catalyses the reaction an alpha-Kdo-(2-&gt;4)-alpha-Kdo-(2-&gt;6)-lipid A + ADP-L-glycero-beta-D-manno-heptose = an L-alpha-D-Hep-(1-&gt;5)-[alpha-Kdo-(2-&gt;4)]-alpha-Kdo-(2-&gt;6)-lipid A + ADP + H(+). The protein operates within bacterial outer membrane biogenesis; LPS core biosynthesis. Functionally, glycosyltransferase involved in the biosynthesis of the core oligosaccharide region of lipopolysaccharide (LPS). Catalyzes the addition of the first heptose unit to one 3-deoxy-D-manno-octulosonic acid (Kdo) residue of the Kdo2-lipid A module. The polypeptide is Lipopolysaccharide heptosyltransferase 1 (Pseudomonas aeruginosa (strain ATCC 15692 / DSM 22644 / CIP 104116 / JCM 14847 / LMG 12228 / 1C / PRS 101 / PAO1)).